Consider the following 181-residue polypeptide: Crossover junction endodeoxyribonuclease RuvC (181 aa).

Catalysis depends on residues Asp-7, Glu-67, and Asp-139. Mg(2+) is bound by residues Asp-7, Glu-67, and Asp-139.

The protein belongs to the RuvC family. Homodimer which binds Holliday junction (HJ) DNA. The HJ becomes 2-fold symmetrical on binding to RuvC with unstacked arms; it has a different conformation from HJ DNA in complex with RuvA. In the full resolvosome a probable DNA-RuvA(4)-RuvB(12)-RuvC(2) complex forms which resolves the HJ. Mg(2+) serves as cofactor.

The protein localises to the cytoplasm. The enzyme catalyses Endonucleolytic cleavage at a junction such as a reciprocal single-stranded crossover between two homologous DNA duplexes (Holliday junction).. Its function is as follows. The RuvA-RuvB-RuvC complex processes Holliday junction (HJ) DNA during genetic recombination and DNA repair. Endonuclease that resolves HJ intermediates. Cleaves cruciform DNA by making single-stranded nicks across the HJ at symmetrical positions within the homologous arms, yielding a 5'-phosphate and a 3'-hydroxyl group; requires a central core of homology in the junction. The consensus cleavage sequence is 5'-(A/T)TT(C/G)-3'. Cleavage occurs on the 3'-side of the TT dinucleotide at the point of strand exchange. HJ branch migration catalyzed by RuvA-RuvB allows RuvC to scan DNA until it finds its consensus sequence, where it cleaves and resolves the cruciform DNA. The protein is Crossover junction endodeoxyribonuclease RuvC of Bordetella avium (strain 197N).